The sequence spans 394 residues: Elongation factor Tu (394 aa).

The region spanning 10-204 (KEHVNVGTIG…AVDTYIENPV (195 aa)) is the tr-type G domain. Residues 19 to 26 (GHVDHGKT) are G1. A GTP-binding site is contributed by 19–26 (GHVDHGKT). Residue Thr26 coordinates Mg(2+). The G2 stretch occupies residues 60–64 (GITIN). The G3 stretch occupies residues 81–84 (DCPG). GTP contacts are provided by residues 81 to 85 (DCPGH) and 136 to 139 (NKCD). The tract at residues 136–139 (NKCD) is G4. Positions 174–176 (SAL) are G5.

This sequence belongs to the TRAFAC class translation factor GTPase superfamily. Classic translation factor GTPase family. EF-Tu/EF-1A subfamily. As to quaternary structure, monomer.

It is found in the cytoplasm. It carries out the reaction GTP + H2O = GDP + phosphate + H(+). GTP hydrolase that promotes the GTP-dependent binding of aminoacyl-tRNA to the A-site of ribosomes during protein biosynthesis. The chain is Elongation factor Tu from Mycoplasmopsis synoviae (strain 53) (Mycoplasma synoviae).